A 209-amino-acid polypeptide reads, in one-letter code: Pyridoxine/pyridoxamine 5'-phosphate oxidase (209 aa).

Substrate is bound by residues 2–5 and K66; that span reads RVEY. Residues 61–66, 76–77, K83, and Q105 contribute to the FMN site; these read RTVLCK and FT. Positions 123, 127, and 131 each coordinate substrate. FMN contacts are provided by residues 140-141 and W186; that span reads QS. Substrate is bound at residue 192 to 194; that stretch reads RVH. Position 196 (R196) interacts with FMN.

It belongs to the pyridoxamine 5'-phosphate oxidase family. As to quaternary structure, homodimer. The cofactor is FMN.

The catalysed reaction is pyridoxamine 5'-phosphate + O2 + H2O = pyridoxal 5'-phosphate + H2O2 + NH4(+). It catalyses the reaction pyridoxine 5'-phosphate + O2 = pyridoxal 5'-phosphate + H2O2. It participates in cofactor metabolism; pyridoxal 5'-phosphate salvage; pyridoxal 5'-phosphate from pyridoxamine 5'-phosphate: step 1/1. The protein operates within cofactor metabolism; pyridoxal 5'-phosphate salvage; pyridoxal 5'-phosphate from pyridoxine 5'-phosphate: step 1/1. In terms of biological role, catalyzes the oxidation of either pyridoxine 5'-phosphate (PNP) or pyridoxamine 5'-phosphate (PMP) into pyridoxal 5'-phosphate (PLP). The chain is Pyridoxine/pyridoxamine 5'-phosphate oxidase from Mycobacterium sp. (strain JLS).